Reading from the N-terminus, the 427-residue chain is Glutamate-1-semialdehyde 2,1-aminomutase (427 aa).

An N6-(pyridoxal phosphate)lysine modification is found at Lys-265.

The protein belongs to the class-III pyridoxal-phosphate-dependent aminotransferase family. HemL subfamily. As to quaternary structure, homodimer. It depends on pyridoxal 5'-phosphate as a cofactor.

It localises to the cytoplasm. The enzyme catalyses (S)-4-amino-5-oxopentanoate = 5-aminolevulinate. It participates in porphyrin-containing compound metabolism; protoporphyrin-IX biosynthesis; 5-aminolevulinate from L-glutamyl-tRNA(Glu): step 2/2. This Pseudomonas entomophila (strain L48) protein is Glutamate-1-semialdehyde 2,1-aminomutase.